The primary structure comprises 639 residues: Tetracycline resistance protein TetM from transposon Tn5251 (639 aa).

The 242-residue stretch at 1–242 (MKIINIGVLA…VITNKFYSST (242 aa)) folds into the tr-type G domain. Residues 10 to 17 (AHVDAGKT), 74 to 78 (DTPGH), and 128 to 131 (NKID) contribute to the GTP site.

This sequence belongs to the TRAFAC class translation factor GTPase superfamily. Classic translation factor GTPase family. TetM/TetO subfamily.

In terms of biological role, abolishes the inhibitory effect of tetracyclin on protein synthesis by a non-covalent modification of the ribosomes. This chain is Tetracycline resistance protein TetM from transposon Tn5251 (tetM(5251)), found in Streptococcus pneumoniae.